A 319-amino-acid polypeptide reads, in one-letter code: 4-diphosphocytidyl-2-C-methyl-D-erythritol kinase (319 aa).

K18 is an active-site residue. 103-113 (PIGAGLAGGST) serves as a coordination point for ATP. Residue D145 is part of the active site.

Belongs to the GHMP kinase family. IspE subfamily.

The catalysed reaction is 4-CDP-2-C-methyl-D-erythritol + ATP = 4-CDP-2-C-methyl-D-erythritol 2-phosphate + ADP + H(+). Its pathway is isoprenoid biosynthesis; isopentenyl diphosphate biosynthesis via DXP pathway; isopentenyl diphosphate from 1-deoxy-D-xylulose 5-phosphate: step 3/6. Catalyzes the phosphorylation of the position 2 hydroxy group of 4-diphosphocytidyl-2C-methyl-D-erythritol. This Prochlorococcus marinus (strain NATL2A) protein is 4-diphosphocytidyl-2-C-methyl-D-erythritol kinase.